The following is a 263-amino-acid chain: Endonuclease 8 (263 aa).

Pro-2 acts as the Schiff-base intermediate with DNA in catalysis. Glu-3 functions as the Proton donor in the catalytic mechanism. The Proton donor; for beta-elimination activity role is filled by Lys-53. The DNA site is built by Gln-70, Arg-125, and Asn-169. The segment at 229-263 adopts an FPG-type zinc-finger fold; that stretch reads KVFHRDGEACERCGGIIEKTTLSSRPFYWCPHCQK. The Proton donor; for delta-elimination activity role is filled by Arg-253.

It belongs to the FPG family. Zn(2+) is required as a cofactor.

The enzyme catalyses 2'-deoxyribonucleotide-(2'-deoxyribose 5'-phosphate)-2'-deoxyribonucleotide-DNA = a 3'-end 2'-deoxyribonucleotide-(2,3-dehydro-2,3-deoxyribose 5'-phosphate)-DNA + a 5'-end 5'-phospho-2'-deoxyribonucleoside-DNA + H(+). Its function is as follows. Involved in base excision repair of DNA damaged by oxidation or by mutagenic agents. Acts as a DNA glycosylase that recognizes and removes damaged bases. Has a preference for oxidized pyrimidines, such as thymine glycol, 5,6-dihydrouracil and 5,6-dihydrothymine. Has AP (apurinic/apyrimidinic) lyase activity and introduces nicks in the DNA strand. Cleaves the DNA backbone by beta-delta elimination to generate a single-strand break at the site of the removed base with both 3'- and 5'-phosphates. The sequence is that of Endonuclease 8 from Salmonella paratyphi B (strain ATCC BAA-1250 / SPB7).